A 101-amino-acid chain; its full sequence is Thioredoxin 1 (101 aa).

The 100-residue stretch at 2–101 folds into the Thioredoxin domain; sequence AQTLDDLIRT…MRQEVLKAIG (100 aa). Cysteines 25 and 28 form a disulfide.

Belongs to the thioredoxin family.

Participates in various redox reactions through the reversible oxidation of its active center dithiol to a disulfide and catalyzes dithiol-disulfide exchange reactions. In Chlorobaculum tepidum (strain ATCC 49652 / DSM 12025 / NBRC 103806 / TLS) (Chlorobium tepidum), this protein is Thioredoxin 1 (trx1).